The primary structure comprises 500 residues: MSTKTVLVWYRNDLRVHDHEPLTSALHKNARVVALYCFDPRQFGKAPFGFEKTGPFRARFLLESVADLRRSLRQLGSDLLVRRGHPEEVIPALVSELEIAAVHYHGEVTSEELVVERDLQAALAPLNVPVRSFWGTTLVHPDDLPFAIEAIPELFTDFRKQVERSAAINPPLPAPAKLPPLPAVDPGEIPQLADLGLESPVTDERAVLQFKGGETSGLARLEEYFWQKSLLKSYKQTRNGMLGADYSSKFSAWLALGCLSARYIHEQVQTYETKRIKNDSTYWLIFELLWRDYFRFIAAKHGDRLFYTAGLRGLDIPWKEDWERFELWRTGQTGFPLVDANMRELAATGFMSNRGRQNVASFLTKNLGIHWHMGAEWFESRLIDYDVASNWGNWNYTAGVGNDARGFRFFNILKQARDYDPDGAYVKHWLPELAGLPPARVHEPWKLLPVEQKRFGVRLGVDYPQPVVDLFQSAAANEAIYNAAWEHHHRKRRGQPRSRT.

A Photolyase/cryptochrome alpha/beta domain is found at 4-138; that stretch reads KTVLVWYRND…PVRSFWGTTL (135 aa).

The protein belongs to the DNA photolyase class-1 family. FAD serves as cofactor. (6R)-5,10-methylene-5,6,7,8-tetrahydrofolate is required as a cofactor.

Functionally, may have a photoreceptor function. Binds DNA; probably functions as a transcriptional repressor. The polypeptide is Cryptochrome DASH (cry) (Gloeobacter violaceus (strain ATCC 29082 / PCC 7421)).